The primary structure comprises 214 residues: Somatotropin-A (214 aa).

Positions 1–25 (MATGFCSSFGLLVVLLLKNVADVGA) are cleaved as a signal peptide. 2 cysteine pairs are disulfide-bonded: cysteine 77/cysteine 187 and cysteine 204/cysteine 212.

Belongs to the somatotropin/prolactin family.

Its subcellular location is the secreted. Functionally, growth hormone plays an important role in growth control. In Xenopus laevis (African clawed frog), this protein is Somatotropin-A (gh-a).